A 461-amino-acid chain; its full sequence is tRNA modification GTPase MnmE (461 aa).

Positions 27, 89, and 128 each coordinate (6S)-5-formyl-5,6,7,8-tetrahydrofolate. One can recognise a TrmE-type G domain in the interval 224-382 (GLATAIVGRP…LENAIEKLFF (159 aa)). Position 234 (N234) interacts with K(+). GTP-binding positions include 234 to 239 (NVGKSS), 253 to 259 (TDIAGTT), and 278 to 281 (DTAG). A Mg(2+)-binding site is contributed by S238. K(+)-binding residues include T253, I255, and T258. Residue T259 participates in Mg(2+) binding. K461 contributes to the (6S)-5-formyl-5,6,7,8-tetrahydrofolate binding site.

It belongs to the TRAFAC class TrmE-Era-EngA-EngB-Septin-like GTPase superfamily. TrmE GTPase family. In terms of assembly, homodimer. Heterotetramer of two MnmE and two MnmG subunits. K(+) serves as cofactor.

Its subcellular location is the cytoplasm. Exhibits a very high intrinsic GTPase hydrolysis rate. Involved in the addition of a carboxymethylaminomethyl (cmnm) group at the wobble position (U34) of certain tRNAs, forming tRNA-cmnm(5)s(2)U34. The sequence is that of tRNA modification GTPase MnmE from Lactobacillus gasseri (strain ATCC 33323 / DSM 20243 / BCRC 14619 / CIP 102991 / JCM 1131 / KCTC 3163 / NCIMB 11718 / NCTC 13722 / AM63).